We begin with the raw amino-acid sequence, 440 residues long: Enolase (440 aa).

Q168 contacts (2R)-2-phosphoglycerate. The Proton donor role is filled by E210. Residues D249, E300, and D326 each coordinate Mg(2+). Residues K351, R380, S381, and K402 each contribute to the (2R)-2-phosphoglycerate site. K351 serves as the catalytic Proton acceptor.

It belongs to the enolase family. Mg(2+) is required as a cofactor.

It localises to the cytoplasm. Its subcellular location is the secreted. It is found in the cell surface. The catalysed reaction is (2R)-2-phosphoglycerate = phosphoenolpyruvate + H2O. Its pathway is carbohydrate degradation; glycolysis; pyruvate from D-glyceraldehyde 3-phosphate: step 4/5. Catalyzes the reversible conversion of 2-phosphoglycerate (2-PG) into phosphoenolpyruvate (PEP). It is essential for the degradation of carbohydrates via glycolysis. In Ureaplasma parvum serovar 3 (strain ATCC 27815 / 27 / NCTC 11736), this protein is Enolase.